The chain runs to 375 residues: MPPKKKQTAAAGKDRSKALELAMAQIEKDFGKGAIMRLGDDTRPPIQAISSGNIAINAALGIGGFPRGRVVEIYGPESSGKTTVALHAIAEAQRAGGIAAFVDAEHALDPEYARALGVDTDALLVSQPDTGEQALEIADMLIRSGAIDIIVVDSVAALTPKAEIDGDMGDSHVGLQARLMSQALRKMTGALYQTGTTAIFINQLREKIGVMFGSPETTTGGKALKFYASVRCDIRRIQALKDGQDVVGNRTRLKVVKNKVSPPFKIAEFDILYGEGISREGSIIDLGVETGLIKKSGSWFTYDGDQLGQGKEKAREFLKNNRDLSAELEDRIARELKIGPYAKMKDEQTEEAAGDQMDEDKPIDLSPNFDDDDAN.

75 to 82 (GPESSGKT) contacts ATP. Positions 339–375 (GPYAKMKDEQTEEAAGDQMDEDKPIDLSPNFDDDDAN) are disordered. Residues 348 to 358 (QTEEAAGDQMD) show a composition bias toward acidic residues.

Belongs to the RecA family.

The protein resides in the cytoplasm. Functionally, can catalyze the hydrolysis of ATP in the presence of single-stranded DNA, the ATP-dependent uptake of single-stranded DNA by duplex DNA, and the ATP-dependent hybridization of homologous single-stranded DNAs. It interacts with LexA causing its activation and leading to its autocatalytic cleavage. The sequence is that of Protein RecA from Corynebacterium jeikeium (strain K411).